The following is a 238-amino-acid chain: tRNA (guanine-N(7)-)-methyltransferase (238 aa).

Residues glutamate 68, glutamate 93, aspartate 120, and aspartate 143 each coordinate S-adenosyl-L-methionine. The active site involves aspartate 143. Substrate contacts are provided by residues lysine 147, aspartate 179, and 216-219 (TKFE).

This sequence belongs to the class I-like SAM-binding methyltransferase superfamily. TrmB family.

The catalysed reaction is guanosine(46) in tRNA + S-adenosyl-L-methionine = N(7)-methylguanosine(46) in tRNA + S-adenosyl-L-homocysteine. It functions in the pathway tRNA modification; N(7)-methylguanine-tRNA biosynthesis. Its function is as follows. Catalyzes the formation of N(7)-methylguanine at position 46 (m7G46) in tRNA. The chain is tRNA (guanine-N(7)-)-methyltransferase from Shewanella frigidimarina (strain NCIMB 400).